The following is a 94-amino-acid chain: ATP-dependent Clp protease adapter protein ClpS (94 aa).

It belongs to the ClpS family. In terms of assembly, binds to the N-terminal domain of the chaperone ClpA.

Its function is as follows. Involved in the modulation of the specificity of the ClpAP-mediated ATP-dependent protein degradation. This chain is ATP-dependent Clp protease adapter protein ClpS, found in Thermosynechococcus vestitus (strain NIES-2133 / IAM M-273 / BP-1).